The chain runs to 78 residues: Large ribosomal subunit protein bL28 (78 aa).

The disordered stretch occupies residues M1 to R23.

Belongs to the bacterial ribosomal protein bL28 family.

The polypeptide is Large ribosomal subunit protein bL28 (Marinomonas sp. (strain MWYL1)).